Here is a 133-residue protein sequence, read N- to C-terminus: Histone H2A (133 aa).

Over residues 1 to 10 (MTGGKSGGKA) the composition is skewed to gly residues. The tract at residues 1–24 (MTGGKSGGKASGSKNAQSRSSKAG) is disordered. N6-acetyllysine occurs at positions 5 and 9. An N5-methylglutamine modification is found at Gln-106. At Ser-130 the chain carries Phosphoserine. Residues 130-131 (SQ) carry the [ST]-Q motif motif.

Belongs to the histone H2A family. In terms of assembly, the nucleosome is a histone octamer containing two molecules each of H2A, H2B, H3 and H4 assembled in one H3-H4 heterotetramer and two H2A-H2B heterodimers. The octamer wraps approximately 147 bp of DNA. Post-translationally, phosphorylated to form H2AS128ph (gamma-H2A) in response to DNA double-strand breaks (DSBs) generated by exogenous genotoxic agents and by stalled replication forks. Phosphorylation is dependent on the DNA damage checkpoint kinases mec1/ATR and tel1/ATM, spreads on either side of a detected DSB site and may mark the surrounding chromatin for recruitment of proteins required for DNA damage signaling and repair. Gamma-H2A is removed from the DNA prior to the strand invasion-primer extension step of the repair process and subsequently dephosphorylated. Dephosphorylation is necessary for efficient recovery from the DNA damage checkpoint. In terms of processing, acetylated by esa1 to form H2AK4ac and H2AK7ac.

The protein localises to the nucleus. Its subcellular location is the chromosome. Core component of nucleosome which plays a central role in DNA double strand break (DSB) repair. Nucleosomes wrap and compact DNA into chromatin, limiting DNA accessibility to the cellular machineries which require DNA as a template. Histones thereby play a central role in transcription regulation, DNA repair, DNA replication and chromosomal stability. DNA accessibility is regulated via a complex set of post-translational modifications of histones, also called histone code, and nucleosome remodeling. In Aspergillus clavatus (strain ATCC 1007 / CBS 513.65 / DSM 816 / NCTC 3887 / NRRL 1 / QM 1276 / 107), this protein is Histone H2A (hta1).